We begin with the raw amino-acid sequence, 485 residues long: Cobyric acid synthase (485 aa).

The region spanning 250–436 is the GATase cobBQ-type domain; it reads RRIVACPILP…IHGLLASPAL (187 aa). The active-site Nucleophile is Cys332. His428 is an active-site residue.

This sequence belongs to the CobB/CobQ family. CobQ subfamily.

It participates in cofactor biosynthesis; adenosylcobalamin biosynthesis. Its function is as follows. Catalyzes amidations at positions B, D, E, and G on adenosylcobyrinic A,C-diamide. NH(2) groups are provided by glutamine, and one molecule of ATP is hydrogenolyzed for each amidation. The sequence is that of Cobyric acid synthase from Sphingopyxis alaskensis (strain DSM 13593 / LMG 18877 / RB2256) (Sphingomonas alaskensis).